The following is an 811-amino-acid chain: Transmembrane protease serine 6 (811 aa).

The tract at residues 1–48 is disordered; sequence MPRCFQLPCSTRMPTTEVPQAADGQGDAGDGEEAAEPEGKFKPPKNTK. The Cytoplasmic segment spans residues 1-59; the sequence is MPRCFQLPCSTRMPTTEVPQAADGQGDAGDGEEAAEPEGKFKPPKNTKRKNRDYVRFTP. The segment covering 8 to 18 has biased composition (polar residues); sequence PCSTRMPTTEV. Residues 60 to 80 traverse the membrane as a helical; Signal-anchor for type II membrane protein segment; that stretch reads LLLVLAALVSAGVMLWYFLGY. At 81–811 the chain is on the extracellular side; that stretch reads KAEVTVSQVY…VINWIQQVLT (731 aa). The SEA domain maps to 86-209; it reads VSQVYSGSLR…EGLVILEASV (124 aa). Residues Asn-138, Asn-184, Asn-216, Asn-338, Asn-433, and Asn-453 are each glycosylated (N-linked (GlcNAc...) asparagine). CUB domains lie at 213-336 and 323-440; these read VVLN…QDCQ and FLLS…QISL. Cysteines 335 and 366 form a disulfide. LDL-receptor class A domains are found at residues 445–477, 478–514, and 518–555; these read VQVYYSLYNQSDPCPGEFLCSVNGLCVPACDGI, KDCPNGLDERNCVCRAMFQCQEDSTCISLPRVCDRQP, and NGSDEEQCQEGVPCGTFTFQCEDRSCVKKPNPECDGQS. 10 disulfides stabilise this stretch: Cys-458–Cys-470, Cys-464–Cys-480, Cys-474–Cys-489, Cys-491–Cys-503, Cys-497–Cys-516, Cys-510–Cys-525, Cys-531–Cys-543, Cys-538–Cys-557, Cys-551–Cys-566, and Cys-602–Cys-618. A glycan (N-linked (GlcNAc...) asparagine) is linked at Asn-518. Residues 577–811 form the Peptidase S1 domain; that stretch reads IVGGTVSSEG…VINWIQQVLT (235 aa). Active-site charge relay system residues include His-617 and Asp-668. Cystine bridges form between Cys-702–Cys-768, Cys-733–Cys-747, and Cys-758–Cys-787. Ser-762 serves as the catalytic Charge relay system.

It belongs to the peptidase S1 family. As to quaternary structure, interacts with HJV. Post-translationally, the single-chain zymogen undergoes autoproteolytic processing. This results in TMPRSS6 shedding from the cell surface and conversion into an activated two-chains form which is released extracellularly. The process involves a trans-activation mechanism that requires TMPRSS6 oligomerization. In terms of tissue distribution, expressed at highest levels in adult mice liver, kidney and uterus. Also strongly expressed within the nasal cavity by olfactory epithelial cells. A weak, but detectable, signal in adult mice tissues analyzed including brain, lung, heart, kidney, spleen, muscle, intestine, thymus and pancreas. No signal in residual embryonic yolk sac, developing kidney tubules or in embryonic tissues analyzed including lung, heart, gastrointestinal tract and epithelium of the oral cavity.

It localises to the cell membrane. Membrane-bound serine protease. Through the cleavage of cell surface HJV, a regulator of the expression of the iron absorption-regulating hormone hepicidin/HAMP, plays a role in iron homeostasis. In Mus musculus (Mouse), this protein is Transmembrane protease serine 6 (Tmprss6).